We begin with the raw amino-acid sequence, 338 residues long: Trace amine-associated receptor 9 (338 aa).

At Met-1–Ala-23 the chain is on the extracellular side. N-linked (GlcNAc...) asparagine glycosylation is present at Asn-9. Cystine bridges form between Cys-12–Cys-176 and Cys-95–Cys-180. A helical membrane pass occupies residues Ile-24–Leu-48. At His-49 to Asn-58 the chain is on the cytoplasmic side. Residues Phe-59–Thr-80 traverse the membrane as a helical segment. The Extracellular segment spans residues Val-81–Cys-95. The helical transmembrane segment at Lys-96–Ile-118 threads the bilayer. Spermidine-binding residues include Asp-102 and Thr-103. The Cytoplasmic segment spans residues Asp-119–Val-138. Residues Ser-139 to Thr-160 form a helical membrane-spanning segment. The Extracellular segment spans residues Gly-161–Gln-186. An extracellular Loop 2 (ECL2) region spans residues Glu-164–Val-177. The chain crosses the membrane as a helical span at residues Asn-187–Gly-208. The Cytoplasmic portion of the chain corresponds to Arg-209–Ala-246. A helical membrane pass occupies residues Ala-247–Ile-270. Residues Asp-271–Tyr-283 are Extracellular-facing. A helical transmembrane segment spans residues Glu-284–Phe-304. Topologically, residues Tyr-305–Gly-338 are cytoplasmic.

It belongs to the G-protein coupled receptor 1 family. As to expression, mainly expressed in neurons of the olfactory epithelium. Also expressed in the intestine.

The protein localises to the cell membrane. In terms of biological role, olfactory receptor specific for trace amines, such as triethylamine, N-methylpiperidine, N,N-dimethylcyclohexylamine (DMCHA), beta-phenylethylamine (beta-PEA), cadaverine (CAD) and polyamines such as spermidine. Trace amine compounds are enriched in animal body fluids and act on trace amine-associated receptors (TAARs) to elicit both intraspecific and interspecific innate behaviors. Trace amine-binding causes a conformation change that triggers signaling via G(s)-class of G alpha proteins (GNAL or GNAS). In mature olfactory sensory neurons, Taar9 is coupled with GNAL/G(olf)G alpha protein and mediates activation of adenylate cyclase activity to activate cAMP signaling and eventually transmit odorant signals to achieve membrane depolarization. In immature olfactory sensory neurons, Taar9 is coupled with GNAS/G(s) G alpha proteins. This chain is Trace amine-associated receptor 9, found in Rattus norvegicus (Rat).